Here is a 287-residue protein sequence, read N- to C-terminus: Coatomer subunit epsilon-1 (287 aa).

It belongs to the COPE family. In terms of assembly, oligomeric complex that consists of at least the alpha, beta, beta', gamma, delta, epsilon and zeta subunits.

It is found in the cytoplasm. The protein localises to the golgi apparatus membrane. Its subcellular location is the cytoplasmic vesicle. The protein resides in the COPI-coated vesicle membrane. In terms of biological role, the coatomer is a cytosolic protein complex that binds to dilysine motifs and reversibly associates with Golgi non-clathrin-coated vesicles, which further mediate biosynthetic protein transport from the ER, via the Golgi up to the trans Golgi network. The coatomer complex is required for budding from Golgi membranes, and is essential for the retrograde Golgi-to-ER transport of dilysine-tagged proteins. This is Coatomer subunit epsilon-1 (COPE1) from Oryza sativa subsp. japonica (Rice).